A 487-amino-acid polypeptide reads, in one-letter code: N-succinylglutamate 5-semialdehyde dehydrogenase (487 aa).

221–226 (GSSDTG) provides a ligand contact to NAD(+). Residues E244 and C278 contribute to the active site.

The protein belongs to the aldehyde dehydrogenase family. AstD subfamily.

It carries out the reaction N-succinyl-L-glutamate 5-semialdehyde + NAD(+) + H2O = N-succinyl-L-glutamate + NADH + 2 H(+). Its pathway is amino-acid degradation; L-arginine degradation via AST pathway; L-glutamate and succinate from L-arginine: step 4/5. In terms of biological role, catalyzes the NAD-dependent reduction of succinylglutamate semialdehyde into succinylglutamate. In Burkholderia lata (strain ATCC 17760 / DSM 23089 / LMG 22485 / NCIMB 9086 / R18194 / 383), this protein is N-succinylglutamate 5-semialdehyde dehydrogenase.